The primary structure comprises 334 residues: Uracil-DNA glycosylase (334 aa).

Positions 1–17 (MKRACSRSPSPRRRPSS) are enriched in basic residues. 2 disordered regions span residues 1–63 (MKRA…CRSS) and 79–104 (VTFS…AATS). Over residues 40 to 50 (GASNDASTETR) the composition is skewed to polar residues. The Proton acceptor role is filled by aspartate 178.

It belongs to the uracil-DNA glycosylase (UDG) superfamily. UNG family.

It is found in the host nucleus. The catalysed reaction is Hydrolyzes single-stranded DNA or mismatched double-stranded DNA and polynucleotides, releasing free uracil.. Functionally, excises uracil residues from the DNA which can arise as a result of misincorporation of dUMP residues by DNA polymerase or deamination of cytosines. Therefore may reduce deleterious uracil incorporation into the viral genome, particularly in terminally differentiated cells which lack DNA repair enzymes. The polypeptide is Uracil-DNA glycosylase (Human herpesvirus 1 (strain 17) (HHV-1)).